Reading from the N-terminus, the 361-residue chain is Peptide chain release factor 1 (361 aa).

Gln-235 bears the N5-methylglutamine mark.

It belongs to the prokaryotic/mitochondrial release factor family. Methylated by PrmC. Methylation increases the termination efficiency of RF1.

Its subcellular location is the cytoplasm. Peptide chain release factor 1 directs the termination of translation in response to the peptide chain termination codons UAG and UAA. This is Peptide chain release factor 1 from Chlamydia felis (strain Fe/C-56) (Chlamydophila felis).